A 156-amino-acid polypeptide reads, in one-letter code: 6,7-dimethyl-8-ribityllumazine synthase (156 aa).

5-amino-6-(D-ribitylamino)uracil-binding positions include Phe22, Ala57 to Glu59, and Thr81 to Ile83. Position 86 to 87 (Gly86 to Thr87) interacts with (2S)-2-hydroxy-3-oxobutyl phosphate. His89 serves as the catalytic Proton donor. Phe114 provides a ligand contact to 5-amino-6-(D-ribitylamino)uracil. Residue Arg128 coordinates (2S)-2-hydroxy-3-oxobutyl phosphate.

This sequence belongs to the DMRL synthase family. As to quaternary structure, forms an icosahedral capsid composed of 60 subunits, arranged as a dodecamer of pentamers.

It catalyses the reaction (2S)-2-hydroxy-3-oxobutyl phosphate + 5-amino-6-(D-ribitylamino)uracil = 6,7-dimethyl-8-(1-D-ribityl)lumazine + phosphate + 2 H2O + H(+). It participates in cofactor biosynthesis; riboflavin biosynthesis; riboflavin from 2-hydroxy-3-oxobutyl phosphate and 5-amino-6-(D-ribitylamino)uracil: step 1/2. Functionally, catalyzes the formation of 6,7-dimethyl-8-ribityllumazine by condensation of 5-amino-6-(D-ribitylamino)uracil with 3,4-dihydroxy-2-butanone 4-phosphate. This is the penultimate step in the biosynthesis of riboflavin. The chain is 6,7-dimethyl-8-ribityllumazine synthase from Enterobacter sp. (strain 638).